Reading from the N-terminus, the 157-residue chain is Small ribosomal subunit protein uS7 (157 aa).

The protein belongs to the universal ribosomal protein uS7 family. Part of the 30S ribosomal subunit. Contacts proteins S9 and S11.

Its function is as follows. One of the primary rRNA binding proteins, it binds directly to 16S rRNA where it nucleates assembly of the head domain of the 30S subunit. Is located at the subunit interface close to the decoding center, probably blocks exit of the E-site tRNA. The chain is Small ribosomal subunit protein uS7 from Koribacter versatilis (strain Ellin345).